A 94-amino-acid polypeptide reads, in one-letter code: Small ribosomal subunit protein uS19 (94 aa).

This sequence belongs to the universal ribosomal protein uS19 family.

Its function is as follows. Protein S19 forms a complex with S13 that binds strongly to the 16S ribosomal RNA. The polypeptide is Small ribosomal subunit protein uS19 (Desulforamulus reducens (strain ATCC BAA-1160 / DSM 100696 / MI-1) (Desulfotomaculum reducens)).